An 85-amino-acid polypeptide reads, in one-letter code: Large ribosomal subunit protein bL27 (85 aa).

The interval 1-22 (MAHKKAGGSSRNGRDSESKRLG) is disordered.

The protein belongs to the bacterial ribosomal protein bL27 family.

This chain is Large ribosomal subunit protein bL27, found in Tolumonas auensis (strain DSM 9187 / NBRC 110442 / TA 4).